A 119-amino-acid polypeptide reads, in one-letter code: UPF0102 protein Nther_1376 (119 aa).

It belongs to the UPF0102 family.

In Natranaerobius thermophilus (strain ATCC BAA-1301 / DSM 18059 / JW/NM-WN-LF), this protein is UPF0102 protein Nther_1376.